A 70-amino-acid polypeptide reads, in one-letter code: U-actitoxin-Ael2c (70 aa).

A signal peptide spans 1–21 (SYQRFLFLVVVASLIATSLAI). Residues 22–26 (PKDLE) constitute a propeptide that is removed on maturation. Cystine bridges form between C32–C65, C34–C58, and C48–C66.

This sequence belongs to the sea anemone type 3 (BDS) potassium channel toxin family.

The protein localises to the secreted. Its subcellular location is the nematocyst. Its function is as follows. Potently and selectively inhibits voltage-gated potassium channels Kv11/KCNH/ERG. Acts as a gating-modifier toxin that shifts the voltage-dependence of ERG activation in the positive direction and suppresses its current amplitudes elicited by strong depolarizing pulses that maximally activate the channels. In Anthopleura elegantissima (Green aggregating anemone), this protein is U-actitoxin-Ael2c.